The sequence spans 164 residues: SsrA-binding protein (164 aa).

A disordered region spans residues 141 to 164 (KLHDKRQDEKQKSIKKEINSALKR). Residues 145–158 (KRQDEKQKSIKKEI) show a composition bias toward basic and acidic residues.

The protein belongs to the SmpB family.

Its subcellular location is the cytoplasm. In terms of biological role, required for rescue of stalled ribosomes mediated by trans-translation. Binds to transfer-messenger RNA (tmRNA), required for stable association of tmRNA with ribosomes. tmRNA and SmpB together mimic tRNA shape, replacing the anticodon stem-loop with SmpB. tmRNA is encoded by the ssrA gene; the 2 termini fold to resemble tRNA(Ala) and it encodes a 'tag peptide', a short internal open reading frame. During trans-translation Ala-aminoacylated tmRNA acts like a tRNA, entering the A-site of stalled ribosomes, displacing the stalled mRNA. The ribosome then switches to translate the ORF on the tmRNA; the nascent peptide is terminated with the 'tag peptide' encoded by the tmRNA and targeted for degradation. The ribosome is freed to recommence translation, which seems to be the essential function of trans-translation. In Prochlorococcus marinus (strain AS9601), this protein is SsrA-binding protein.